Consider the following 146-residue polypeptide: Large ribosomal subunit protein uL15 (146 aa).

Residues 1 to 64 (MELNSIKPAA…MPMHRRLPKR (64 aa)) are disordered. Basic residues predominate over residues 30–39 (TATKGHKGQK).

This sequence belongs to the universal ribosomal protein uL15 family. As to quaternary structure, part of the 50S ribosomal subunit.

Functionally, binds to the 23S rRNA. This is Large ribosomal subunit protein uL15 from Geotalea daltonii (strain DSM 22248 / JCM 15807 / FRC-32) (Geobacter daltonii).